The primary structure comprises 410 residues: MPSAISRGLLLLAGLCYLVFGIMAEDIQVAQVPSQHMPSHKVPRSLAHFAHSMHRVLTQQSNTSNIFFSPVSIATALAMVSLGAKGDTHTQILRSLEFNLTEIAEADIHDGFQNLLHTLNRPHSEHQLTTGNGLFLDQNLKLKEKFSGDVKTLYHAEAFPTNFSNPKEAEKQINAYVEKGTQGKIVDLVKDLGADTVLALVNYIFFRGKWEKPFDVKHTTQEDFHVDANTTVKVPMMKQQGMHKAFHCSTIQSWVLLLDYEGNVTALFLLPDEGKMQHLEETLTPELVFKFLRKTETMPAYVSLPKLSISGTYDLKEVLRDLGITNVFSGAADLSGITEDMPLKISKGLHKALLTIDEEGTEAAAATVLEATRTARPPRLSFNKPFFFLIIDHSTDTPLFVGKVMDPTKK.

Positions 1-24 (MPSAISRGLLLLAGLCYLVFGIMA) are cleaved as a signal peptide. Asparagine 62, asparagine 99, asparagine 162, asparagine 229, and asparagine 263 each carry an N-linked (GlcNAc...) asparagine glycan. Residues 360 to 381 (GTEAAAATVLEATRTARPPRLS) form an RCL region.

This sequence belongs to the serpin family.

It localises to the secreted. It is found in the extracellular space. Functionally, contrapsin inhibits trypsin-like proteases. This Cavia porcellus (Guinea pig) protein is Serine proteinase inhibitor A3K (SERPINA3K).